Here is a 200-residue protein sequence, read N- to C-terminus: Large ribosomal subunit protein uL4 (200 aa).

Positions 42–65 (TRAQKTRSEVSGGGAKPWRQKGTG) are disordered.

This sequence belongs to the universal ribosomal protein uL4 family. Part of the 50S ribosomal subunit.

In terms of biological role, one of the primary rRNA binding proteins, this protein initially binds near the 5'-end of the 23S rRNA. It is important during the early stages of 50S assembly. It makes multiple contacts with different domains of the 23S rRNA in the assembled 50S subunit and ribosome. Its function is as follows. Forms part of the polypeptide exit tunnel. In Vibrio campbellii (strain ATCC BAA-1116), this protein is Large ribosomal subunit protein uL4.